Consider the following 262-residue polypeptide: Acyl-[acyl-carrier-protein]--UDP-N-acetylglucosamine O-acyltransferase (262 aa).

The protein belongs to the transferase hexapeptide repeat family. LpxA subfamily. As to quaternary structure, homotrimer.

It is found in the cytoplasm. It catalyses the reaction a (3R)-hydroxyacyl-[ACP] + UDP-N-acetyl-alpha-D-glucosamine = a UDP-3-O-[(3R)-3-hydroxyacyl]-N-acetyl-alpha-D-glucosamine + holo-[ACP]. It participates in glycolipid biosynthesis; lipid IV(A) biosynthesis; lipid IV(A) from (3R)-3-hydroxytetradecanoyl-[acyl-carrier-protein] and UDP-N-acetyl-alpha-D-glucosamine: step 1/6. Involved in the biosynthesis of lipid A, a phosphorylated glycolipid that anchors the lipopolysaccharide to the outer membrane of the cell. This Salmonella dublin (strain CT_02021853) protein is Acyl-[acyl-carrier-protein]--UDP-N-acetylglucosamine O-acyltransferase.